The sequence spans 201 residues: Glutathione peroxidase 1 (201 aa).

Ser32 bears the Phosphoserine mark. Sec47 is a catalytic residue. A non-standard amino acid (selenocysteine) is located at residue Sec47. N6-acetyllysine; alternate is present on residues Lys86, Lys112, and Lys146. N6-succinyllysine; alternate is present on residues Lys86, Lys112, and Lys146. Phosphoserine occurs at positions 195 and 199.

It belongs to the glutathione peroxidase family. As to quaternary structure, homotetramer. Interacts with MIEN1. During periods of oxidative stress, Sec-47 may react with a superoxide radical, irreversibly lose hydroselenide and be converted to dehydroalanine.

The protein localises to the cytoplasm. Its subcellular location is the mitochondrion. It carries out the reaction 2 glutathione + H2O2 = glutathione disulfide + 2 H2O. It catalyses the reaction a hydroperoxy polyunsaturated fatty acid + 2 glutathione = a hydroxy polyunsaturated fatty acid + glutathione disulfide + H2O. The catalysed reaction is tert-butyl hydroperoxide + 2 glutathione = tert-butanol + glutathione disulfide + H2O. The enzyme catalyses cumene hydroperoxide + 2 glutathione = 2-phenylpropan-2-ol + glutathione disulfide + H2O. It carries out the reaction (13S)-hydroperoxy-(9Z,11E)-octadecadienoate + 2 glutathione = (13S)-hydroxy-(9Z,11E)-octadecadienoate + glutathione disulfide + H2O. It catalyses the reaction (9S)-hydroperoxy-(10E,12Z)-octadecadienoate + 2 glutathione = (9S)-hydroxy-(10E,12Z)-octadecadienoate + glutathione disulfide + H2O. The catalysed reaction is (5S)-hydroperoxy-(6E,8Z,11Z,14Z)-eicosatetraenoate + 2 glutathione = (5S)-hydroxy-(6E,8Z,11Z,14Z)-eicosatetraenoate + glutathione disulfide + H2O. The enzyme catalyses (12S)-hydroperoxy-(5Z,8Z,10E,14Z)-eicosatetraenoate + 2 glutathione = (12S)-hydroxy-(5Z,8Z,10E,14Z)-eicosatetraenoate + glutathione disulfide + H2O. It carries out the reaction (12R)-hydroperoxy-(5Z,8Z,10E,14Z)-eicosatetraenoate + 2 glutathione = (12R)-hydroxy-(5Z,8Z,10E,14Z)-eicosatetraenoate + glutathione disulfide + H2O. It catalyses the reaction (15S)-hydroperoxy-(5Z,8Z,11Z,13E)-eicosatetraenoate + 2 glutathione = (15S)-hydroxy-(5Z,8Z,11Z,13E)-eicosatetraenoate + glutathione disulfide + H2O. The catalysed reaction is (5S)-hydroperoxy-(6E,8Z,11Z,14Z,17Z)-eicosapentaenoate + 2 glutathione = (5S)-hydroxy-(6E,8Z,11Z,14Z,17Z)-eicosapentaenoate + glutathione disulfide + H2O. The enzyme catalyses (12S)-hydroperoxy-(5Z,8Z,10E,14Z,17Z)-eicosapentaenoate + 2 glutathione = (12S)-hydroxy-(5Z,8Z,10E,14Z,17Z)-eicosapentaenoate + glutathione disulfide + H2O. It carries out the reaction (15S)-hydroperoxy-(5Z,8Z,11Z,13E,17Z)-eicosapentaenoate + 2 glutathione = (15S)-hydroxy-(5Z,8Z,11Z,13E,17Z)-eicosapentaenoate + glutathione disulfide + H2O. It catalyses the reaction (15S)-hydroperoxy-(11Z,13E)-eicosadienoate + 2 glutathione = (15S)-hydroxy-(11Z,13E)-eicosadienoate + glutathione disulfide + H2O. The catalysed reaction is (17S)-hydroperoxy-(4Z,7Z,10Z,13Z,15E,19Z)-docosahexaenoate + 2 glutathione = (17S)-hydroxy-(4Z,7Z,10Z,13Z,15E,19Z)-docosahexaenoate + glutathione disulfide + H2O. Functionally, catalyzes the reduction of hydroperoxides in a glutathione-dependent manner thus regulating cellular redox homeostasis. Can reduce small soluble hydroperoxides such as H2O2, cumene hydroperoxide and tert-butyl hydroperoxide, as well as several fatty acid-derived hydroperoxides. In platelets catalyzes the reduction of 12-hydroperoxyeicosatetraenoic acid, the primary product of the arachidonate 12-lipoxygenase pathway. This Pan troglodytes (Chimpanzee) protein is Glutathione peroxidase 1 (GPX1).